Consider the following 283-residue polypeptide: Zinc-finger homeodomain protein 8 (283 aa).

The segment at 23–68 (YKECMRNHAAAMGGQAFDGCGEYMPASPDSLKCAACGCHRSFHRRA) adopts a ZF-HD dimerization-type; degenerate zinc-finger fold. 2 disordered regions span residues 131–171 (AGRA…TKFT) and 244–283 (GLGT…PISV). The segment covering 148–161 (GSAGGSGSGGGGIF) has biased composition (gly residues). Residues 163–226 (RKRFRTKFTP…NHKNQLASSP (64 aa)) constitute a DNA-binding region (homeobox). A compositionally biased stretch (gly residues) spans 244–256 (GLGTGLGTGISGD). The segment covering 257-266 (GDGDDDDTDD) has biased composition (acidic residues). A compositionally biased stretch (low complexity) spans 269–283 (PRAAVSSPSPSPISV).

Homo- and heterodimer with other ZFHD proteins.

The protein resides in the nucleus. Its function is as follows. Putative transcription factor. The sequence is that of Zinc-finger homeodomain protein 8 (ZHD8) from Oryza sativa subsp. japonica (Rice).